The following is a 135-amino-acid chain: Ribonuclease P protein component (135 aa).

The disordered stretch occupies residues 115–135; it reads TNETVSPVSDTPLPQHERGSQ.

Belongs to the RnpA family. In terms of assembly, consists of a catalytic RNA component (M1 or rnpB) and a protein subunit.

It catalyses the reaction Endonucleolytic cleavage of RNA, removing 5'-extranucleotides from tRNA precursor.. RNaseP catalyzes the removal of the 5'-leader sequence from pre-tRNA to produce the mature 5'-terminus. It can also cleave other RNA substrates such as 4.5S RNA. The protein component plays an auxiliary but essential role in vivo by binding to the 5'-leader sequence and broadening the substrate specificity of the ribozyme. This is Ribonuclease P protein component from Chloroflexus aurantiacus (strain ATCC 29366 / DSM 635 / J-10-fl).